A 176-amino-acid polypeptide reads, in one-letter code: Nucleoside triphosphate/diphosphate phosphatase (176 aa).

Arginine 23 functions as the Proton donor in the catalytic mechanism. Mg(2+)-binding residues include asparagine 87, aspartate 103, aspartate 105, aspartate 107, aspartate 120, and glutamate 123.

This sequence belongs to the Ntdp family. Mg(2+) serves as cofactor.

The catalysed reaction is a ribonucleoside 5'-triphosphate + H2O = a ribonucleoside 5'-diphosphate + phosphate + H(+). It carries out the reaction a ribonucleoside 5'-diphosphate + H2O = a ribonucleoside 5'-phosphate + phosphate + H(+). Its function is as follows. Has nucleoside phosphatase activity towards nucleoside triphosphates and nucleoside diphosphates. The polypeptide is Nucleoside triphosphate/diphosphate phosphatase (Bacillus cytotoxicus (strain DSM 22905 / CIP 110041 / 391-98 / NVH 391-98)).